Reading from the N-terminus, the 151-residue chain is Large ribosomal subunit protein bL9 (151 aa).

It belongs to the bacterial ribosomal protein bL9 family.

Functionally, binds to the 23S rRNA. This chain is Large ribosomal subunit protein bL9, found in Prochlorococcus marinus (strain MIT 9301).